The chain runs to 235 residues: Large ribosomal subunit protein uL1 (235 aa).

This sequence belongs to the universal ribosomal protein uL1 family. In terms of assembly, part of the 50S ribosomal subunit.

Its function is as follows. Binds directly to 23S rRNA. The L1 stalk is quite mobile in the ribosome, and is involved in E site tRNA release. In terms of biological role, protein L1 is also a translational repressor protein, it controls the translation of the L11 operon by binding to its mRNA. This Prochlorococcus marinus (strain MIT 9301) protein is Large ribosomal subunit protein uL1.